Consider the following 285-residue polypeptide: Eukaryotic translation initiation factor 3 subunit F-2 (285 aa).

The 135-residue stretch at 11 to 145 (VFIKPLVLFQ…TRLYCAVEIG (135 aa)) folds into the MPN domain.

It belongs to the eIF-3 subunit F family. As to quaternary structure, component of the eukaryotic translation initiation factor 3 (eIF-3) complex. The eIF-3 complex interacts with pix.

It is found in the cytoplasm. In terms of biological role, component of the eukaryotic translation initiation factor 3 (eIF-3) complex, which is involved in protein synthesis of a specialized repertoire of mRNAs and, together with other initiation factors, stimulates binding of mRNA and methionyl-tRNAi to the 40S ribosome. The eIF-3 complex specifically targets and initiates translation of a subset of mRNAs involved in cell proliferation. The polypeptide is Eukaryotic translation initiation factor 3 subunit F-2 (Drosophila yakuba (Fruit fly)).